The following is a 260-amino-acid chain: RNA polymerase sigma-G factor (260 aa).

The interval 1–71 (MSRNKVEICG…GEYVDDLFQV (71 aa)) is recognizes anti-sigma-G factor Gin (csfB). Positions 67–80 (DLFQVGCIGLMKSI) match the Polymerase core binding motif. The H-T-H motif DNA-binding region spans 229–248 (QMEVAEEIGISQAQVSRLEK).

The protein belongs to the sigma-70 factor family. In terms of assembly, interacts with anti-sigma-G factor Gin (csfB).

Activity repressed by anti-sigma-G factor Gin (csfB) and Lon protease during the early stages of forespore development. When both Gin and sigma-G are expressed in E.coli Gin inhibits sigma-G activity, strongly suggesting Gin inhibits by direct physical interaction. In terms of biological role, sigma factors are initiation factors that promote the attachment of RNA polymerase to specific initiation sites and are then released. This sigma factor is responsible for the expression of sporulation specific genes in the forespore. The sequence is that of RNA polymerase sigma-G factor (sigG) from Bacillus subtilis (strain 168).